A 131-amino-acid polypeptide reads, in one-letter code: Small ribosomal subunit protein uS8 (131 aa).

The protein belongs to the universal ribosomal protein uS8 family. In terms of assembly, part of the 30S ribosomal subunit. Contacts proteins S5 and S12.

In terms of biological role, one of the primary rRNA binding proteins, it binds directly to 16S rRNA central domain where it helps coordinate assembly of the platform of the 30S subunit. This is Small ribosomal subunit protein uS8 from Laribacter hongkongensis (strain HLHK9).